The chain runs to 906 residues: Valine--tRNA ligase (906 aa).

The short motif at 43–53 (PNVTGSLHIGH) is the 'HIGH' region element. The 'KMSKS' region signature appears at 548–552 (KMSKS). Lys551 is a binding site for ATP. The stretch at 842–905 (EKARLTKDIA…EAALSRLASV (64 aa)) forms a coiled coil.

This sequence belongs to the class-I aminoacyl-tRNA synthetase family. ValS type 1 subfamily. As to quaternary structure, monomer.

Its subcellular location is the cytoplasm. The enzyme catalyses tRNA(Val) + L-valine + ATP = L-valyl-tRNA(Val) + AMP + diphosphate. Its function is as follows. Catalyzes the attachment of valine to tRNA(Val). As ValRS can inadvertently accommodate and process structurally similar amino acids such as threonine, to avoid such errors, it has a 'posttransfer' editing activity that hydrolyzes mischarged Thr-tRNA(Val) in a tRNA-dependent manner. This Caulobacter vibrioides (strain ATCC 19089 / CIP 103742 / CB 15) (Caulobacter crescentus) protein is Valine--tRNA ligase.